The sequence spans 159 residues: MPELKIKTEKVEKQLTKEPLVLKTPKEKIDNLGKFYATGKRKNAIARVWLKVGKGKIVVNKKTIAQYFPSETYVKTILKPFVLTKTIDQYDIICTVRGGGISGQKGAILHGISKALDKSAPDFHAILRKGGLLTRDSRVVERKKYGQRKARKKTQFSKR.

This sequence belongs to the universal ribosomal protein uS9 family.

This is Small ribosomal subunit protein uS9 from Rickettsia africae (strain ESF-5).